The chain runs to 469 residues: Probable glucuronoxylan glucuronosyltransferase F8H (469 aa).

Residues 1–36 (MSLDIKKPNITKTKKKKTGFVVKMQLNNNRGGNKRN) lie on the Cytoplasmic side of the membrane. Residues 37–57 (IFIFFFFRNYYTWILWFCLSL) form a helical; Signal-anchor for type II membrane protein membrane-spanning segment. Residues 58 to 469 (YFFTSYFSVE…RVLSQREVDM (412 aa)) lie on the Lumenal side of the membrane. N-linked (GlcNAc...) asparagine glycosylation is found at N171, N203, N301, and N411.

Belongs to the glycosyltransferase 47 family. As to expression, expressed in xylem cells in stems and in roots.

Its subcellular location is the golgi apparatus membrane. Functionally, involved in the synthesis of the hemicellulose glucuronoxylan, a major component of secondary cell walls. Probably involved in the synthesis of the glycosyl sequence at the glucuronoxylan reducing end. This Arabidopsis thaliana (Mouse-ear cress) protein is Probable glucuronoxylan glucuronosyltransferase F8H (F8H).